Consider the following 348-residue polypeptide: MAVYFVTGKLGSGKTLVSVGKIQDKIVAGCKIATNLDLRLQNLPQVGRFAKTPRVLRIPDKPSISDLLAIGRGNDSYDENKNGLLVLDECGTWFNTRSWNDKERQPIIDWFLHARKLGWDIIFLVQDLSIVDKQARSALAEHVVYCRRLDRITLPFVGTLYSLVTGSKMPLPKLHVGVVKYGDSQLSPTVERWLYTGKNLYNAYDTKQAFSSNYDSGVYSYLTPYLSHGRYFKPLNLGQKMKLTKIYLKKFSRVLCLAIGFASAFTYSYITQPKPEVKKVVSQTYDFDKFTIDSSQRLNLSYRYVFKDSKGKLINSDDLQKQGYSITYIDLCTVSIKKGNSNEIVKCN.

Over 1-252 (MAVYFVTGKL…LTKIYLKKFS (252 aa)) the chain is Cytoplasmic. 8–15 (GKLGSGKT) contacts ATP. The chain crosses the membrane as a helical; Signal-anchor for type II membrane protein span at residues 253 to 273 (RVLCLAIGFASAFTYSYITQP). At 274–348 (KPEVKKVVSQ…GNSNEIVKCN (75 aa)) the chain is on the periplasmic side.

This sequence belongs to the inovirus G1P protein family. As to quaternary structure, interacts with G4P; this interaction results in a complex that spans the inner an outer host membranes.

The protein resides in the host membrane. In terms of biological role, isoform G1P plays an essential role in phage assembly. It is required to increase the number of adhesion zones between the inner and outer membranes of the host cell. The extrusion of neo-synthesized phages occurs at these adhesion sites. May be involved with G4P in creating zone through which the phage assembled and extruded. Its function is as follows. Isoform G11P is also involved in phage assembly, probably playing a structural role in the formation of the phage assembly site. This chain is Gene 1 protein (I), found in Enterobacteria phage fd (Bacteriophage fd).